The chain runs to 150 residues: Large ribosomal subunit protein uL15 (150 aa).

The interval 1–57 (MTIKLESLQSNKGSRRKKMRKGRGIAAGQGASCGFGMRGQKSRSGRPTRPGFEGGQM) is disordered. The segment covering 13 to 23 (GSRRKKMRKGR) has biased composition (basic residues). The span at 25–37 (IAAGQGASCGFGM) shows a compositional bias: gly residues.

The protein belongs to the universal ribosomal protein uL15 family. As to quaternary structure, part of the 50S ribosomal subunit.

Binds to the 23S rRNA. In Prochlorococcus marinus (strain NATL1A), this protein is Large ribosomal subunit protein uL15.